Here is a 760-residue protein sequence, read N- to C-terminus: Xaa-Pro dipeptidyl-peptidase (760 aa).

Residues Ser-349, Asp-469, and His-499 each act as charge relay system in the active site.

This sequence belongs to the peptidase S15 family. As to quaternary structure, homodimer.

The protein resides in the cytoplasm. It carries out the reaction Hydrolyzes Xaa-Pro-|- bonds to release unblocked, N-terminal dipeptides from substrates including Ala-Pro-|-p-nitroanilide and (sequentially) Tyr-Pro-|-Phe-Pro-|-Gly-Pro-|-Ile.. In terms of biological role, removes N-terminal dipeptides sequentially from polypeptides having unsubstituted N-termini provided that the penultimate residue is proline. The protein is Xaa-Pro dipeptidyl-peptidase of Streptococcus pyogenes serotype M1.